Here is a 57-residue protein sequence, read N- to C-terminus: MTTYYYVLLSVTTWVGLRHEAKRELVYRGRRSIGRMPREWACRRSRRFAANGVDAAR.

In terms of assembly, forms a complex with cognate toxin MazF1.

Its function is as follows. Antitoxin component of a type II toxin-antitoxin (TA) system. The polypeptide is Probable antitoxin MazE1 (mazE1) (Mycobacterium tuberculosis (strain ATCC 25618 / H37Rv)).